The sequence spans 501 residues: Glycerol kinase (501 aa).

Residue threonine 17 participates in ADP binding. ATP-binding residues include threonine 17, threonine 18, and serine 19. Residue threonine 17 coordinates sn-glycerol 3-phosphate. Arginine 21 is an ADP binding site. 4 residues coordinate sn-glycerol 3-phosphate: arginine 87, glutamate 88, tyrosine 139, and aspartate 243. The glycerol site is built by arginine 87, glutamate 88, tyrosine 139, aspartate 243, and glutamine 244. The ADP site is built by threonine 265 and glycine 308. Residues threonine 265, glycine 308, glutamine 312, and glycine 409 each contribute to the ATP site. ADP-binding residues include glycine 409 and asparagine 413.

It belongs to the FGGY kinase family.

It carries out the reaction glycerol + ATP = sn-glycerol 3-phosphate + ADP + H(+). The protein operates within polyol metabolism; glycerol degradation via glycerol kinase pathway; sn-glycerol 3-phosphate from glycerol: step 1/1. Its activity is regulated as follows. Inhibited by fructose 1,6-bisphosphate (FBP). In terms of biological role, key enzyme in the regulation of glycerol uptake and metabolism. Catalyzes the phosphorylation of glycerol to yield sn-glycerol 3-phosphate. This is Glycerol kinase from Pseudomonas syringae pv. syringae (strain B728a).